Reading from the N-terminus, the 206-residue chain is Holliday junction branch migration complex subunit RuvA (206 aa).

The tract at residues 1 to 62 is domain I; it reads MYDYLKGLIT…EDAQVLYGFP (62 aa). A domain II region spans residues 63 to 141; sequence NLDQRELFRK…SLLETIELPS (79 aa). The segment at 142–152 is flexible linker; that stretch reads TEDELPLFGVH. Residues 153–206 are domain III; the sequence is PYKHELEEAILALAALGYSEKELEKIRPLLEDNDKLETTDAYMKQALQLLLKLK.

The protein belongs to the RuvA family. As to quaternary structure, homotetramer. Forms an RuvA(8)-RuvB(12)-Holliday junction (HJ) complex. HJ DNA is sandwiched between 2 RuvA tetramers; dsDNA enters through RuvA and exits via RuvB. An RuvB hexamer assembles on each DNA strand where it exits the tetramer. Each RuvB hexamer is contacted by two RuvA subunits (via domain III) on 2 adjacent RuvB subunits; this complex drives branch migration. In the full resolvosome a probable DNA-RuvA(4)-RuvB(12)-RuvC(2) complex forms which resolves the HJ.

It is found in the cytoplasm. Its function is as follows. The RuvA-RuvB-RuvC complex processes Holliday junction (HJ) DNA during genetic recombination and DNA repair, while the RuvA-RuvB complex plays an important role in the rescue of blocked DNA replication forks via replication fork reversal (RFR). RuvA specifically binds to HJ cruciform DNA, conferring on it an open structure. The RuvB hexamer acts as an ATP-dependent pump, pulling dsDNA into and through the RuvAB complex. HJ branch migration allows RuvC to scan DNA until it finds its consensus sequence, where it cleaves and resolves the cruciform DNA. The polypeptide is Holliday junction branch migration complex subunit RuvA (Lysinibacillus sphaericus (strain C3-41)).